We begin with the raw amino-acid sequence, 445 residues long: Tubulin beta-3 chain (445 aa).

Residues Gln-11, Glu-69, Ser-138, Gly-142, Thr-143, Gly-144, Asn-204, and Asn-226 each coordinate GTP. Glu-69 lines the Mg(2+) pocket. Residues 417 to 426 are compositionally biased toward polar residues; sequence DLVSEYQQYQ. The interval 417-445 is disordered; it reads DLVSEYQQYQEASADDEADEFDEEEGDEE. Positions 429–445 are enriched in acidic residues; it reads SADDEADEFDEEEGDEE.

This sequence belongs to the tubulin family. In terms of assembly, dimer of alpha and beta chains. A typical microtubule is a hollow water-filled tube with an outer diameter of 25 nm and an inner diameter of 15 nM. Alpha-beta heterodimers associate head-to-tail to form protofilaments running lengthwise along the microtubule wall with the beta-tubulin subunit facing the microtubule plus end conferring a structural polarity. Microtubules usually have 13 protofilaments but different protofilament numbers can be found in some organisms and specialized cells. Requires Mg(2+) as cofactor.

The protein localises to the cytoplasm. It is found in the cytoskeleton. Functionally, tubulin is the major constituent of microtubules, a cylinder consisting of laterally associated linear protofilaments composed of alpha- and beta-tubulin heterodimers. Microtubules grow by the addition of GTP-tubulin dimers to the microtubule end, where a stabilizing cap forms. Below the cap, tubulin dimers are in GDP-bound state, owing to GTPase activity of alpha-tubulin. This Oomycete-like sp. (strain MacKay2000) protein is Tubulin beta-3 chain (TUBB3).